A 215-amino-acid polypeptide reads, in one-letter code: Adenylate kinase (215 aa).

10 to 15 contacts ATP; the sequence is GAGKGT. An NMP region spans residues 30 to 59; sequence STGDMFRAAMKNETEMGKLAKSFIDKGELV. Residues Thr31, Arg36, 57–59, 86–89, and Gln93 each bind AMP; these read ELV and GYPR. The segment at 127-165 is LID; it reads GRYICRNCGATYHKIFNPTKVEGVCDVCGSHDLYQRADD. Arg128 serves as a coordination point for ATP. Cys131 and Cys134 together coordinate Zn(2+). ATP is bound at residue 137–138; the sequence is TY. 2 residues coordinate Zn(2+): Cys151 and Cys154. Positions 162 and 173 each coordinate AMP. Residue Gln201 participates in ATP binding.

The protein belongs to the adenylate kinase family. As to quaternary structure, monomer.

The protein localises to the cytoplasm. It carries out the reaction AMP + ATP = 2 ADP. It participates in purine metabolism; AMP biosynthesis via salvage pathway; AMP from ADP: step 1/1. Catalyzes the reversible transfer of the terminal phosphate group between ATP and AMP. Plays an important role in cellular energy homeostasis and in adenine nucleotide metabolism. The chain is Adenylate kinase from Lactococcus lactis subsp. lactis (strain IL1403) (Streptococcus lactis).